Consider the following 206-residue polypeptide: Proteasome subunit beta 2 (206 aa).

The propeptide at Met1–Lys7 is removed in mature form; by autocatalysis. Thr8 (nucleophile) is an active-site residue.

This sequence belongs to the peptidase T1B family. The 20S proteasome core is composed of 14 alpha and 14 beta subunits that assemble into four stacked heptameric rings, resulting in a barrel-shaped structure. The two inner rings, each composed of seven catalytic beta subunits, are sandwiched by two outer rings, each composed of seven alpha subunits. The catalytic chamber with the active sites is on the inside of the barrel. Has a gated structure, the ends of the cylinder being occluded by the N-termini of the alpha-subunits. Is capped at one or both ends by the proteasome regulatory ATPase, PAN.

The protein localises to the cytoplasm. The enzyme catalyses Cleavage of peptide bonds with very broad specificity.. The formation of the proteasomal ATPase PAN-20S proteasome complex, via the docking of the C-termini of PAN into the intersubunit pockets in the alpha-rings, triggers opening of the gate for substrate entry. Interconversion between the open-gate and close-gate conformations leads to a dynamic regulation of the 20S proteasome proteolysis activity. Component of the proteasome core, a large protease complex with broad specificity involved in protein degradation. In Desulfurococcus amylolyticus (strain DSM 18924 / JCM 16383 / VKM B-2413 / 1221n) (Desulfurococcus kamchatkensis), this protein is Proteasome subunit beta 2.